The following is a 182-amino-acid chain: Ribosome-recycling factor (182 aa).

This sequence belongs to the RRF family.

The protein localises to the cytoplasm. Its function is as follows. Responsible for the release of ribosomes from messenger RNA at the termination of protein biosynthesis. May increase the efficiency of translation by recycling ribosomes from one round of translation to another. The polypeptide is Ribosome-recycling factor (Prochlorococcus marinus subsp. pastoris (strain CCMP1986 / NIES-2087 / MED4)).